A 454-amino-acid chain; its full sequence is Toluate 1,2-dioxygenase subunit alpha (454 aa).

Positions 51–148 (IYLAHESQIP…SFDCDGSHDL (98 aa)) constitute a Rieske domain. [2Fe-2S] cluster contacts are provided by Cys-92, His-94, Cys-112, and His-115. Fe cation is bound by residues His-221 and His-226.

It belongs to the bacterial ring-hydroxylating dioxygenase alpha subunit family. In terms of assembly, this dioxygenase system consists of three proteins: the two subunits of the hydroxylase component (XylX and XylY), and an electron transfer component (XylZ). [2Fe-2S] cluster serves as cofactor. Requires Fe cation as cofactor.

It functions in the pathway xenobiotic degradation; toluene degradation. The chain is Toluate 1,2-dioxygenase subunit alpha (xylX) from Pseudomonas putida (Arthrobacter siderocapsulatus).